The primary structure comprises 663 residues: Translation factor GUF1, mitochondrial (663 aa).

Residues 1–37 constitute a mitochondrion transit peptide; sequence MRGCLQSVRLLTTALGQSPRRPLPFAFRLPPNASRLF. One can recognise a tr-type G domain in the interval 65-245; sequence ERYRNFCIVA…TIVEQIPAPI (181 aa). Residues 74–81, 138–142, and 192–195 contribute to the GTP site; these read AHVDHGKS, DTPGH, and NKVD.

Belongs to the TRAFAC class translation factor GTPase superfamily. Classic translation factor GTPase family. LepA subfamily.

The protein localises to the mitochondrion inner membrane. It catalyses the reaction GTP + H2O = GDP + phosphate + H(+). Its function is as follows. Promotes mitochondrial protein synthesis. May act as a fidelity factor of the translation reaction, by catalyzing a one-codon backward translocation of tRNAs on improperly translocated ribosomes. Binds to mitochondrial ribosomes in a GTP-dependent manner. This Uncinocarpus reesii (strain UAMH 1704) protein is Translation factor GUF1, mitochondrial.